The sequence spans 431 residues: Serine--tRNA ligase (431 aa).

L-serine is bound at residue 237–239 (TAE). 268 to 270 (RSE) provides a ligand contact to ATP. E291 provides a ligand contact to L-serine. ATP is bound at residue 355-358 (EISS). Residue S390 coordinates L-serine.

Belongs to the class-II aminoacyl-tRNA synthetase family. Type-1 seryl-tRNA synthetase subfamily. Homodimer. The tRNA molecule binds across the dimer.

The protein resides in the cytoplasm. The catalysed reaction is tRNA(Ser) + L-serine + ATP = L-seryl-tRNA(Ser) + AMP + diphosphate + H(+). The enzyme catalyses tRNA(Sec) + L-serine + ATP = L-seryl-tRNA(Sec) + AMP + diphosphate + H(+). It functions in the pathway aminoacyl-tRNA biosynthesis; selenocysteinyl-tRNA(Sec) biosynthesis; L-seryl-tRNA(Sec) from L-serine and tRNA(Sec): step 1/1. Catalyzes the attachment of serine to tRNA(Ser). Is also able to aminoacylate tRNA(Sec) with serine, to form the misacylated tRNA L-seryl-tRNA(Sec), which will be further converted into selenocysteinyl-tRNA(Sec). The chain is Serine--tRNA ligase from Neisseria meningitidis serogroup C (strain 053442).